The following is a 383-amino-acid chain: Embryonic pepsinogen (383 aa).

A signal peptide spans Met-1–Gly-16. Residues Tyr-76–Ala-380 enclose the Peptidase A1 domain. Residue Asp-94 is part of the active site. Cys-107 and Cys-112 are oxidised to a cystine. N-linked (GlcNAc...) asparagine glycosylation is found at Asn-132 and Asn-204. An intrachain disulfide couples Cys-267 to Cys-271. Asp-276 is an active-site residue. An N-linked (GlcNAc...) asparagine glycan is attached at Asn-309. A disulfide bond links Cys-310 and Cys-344. An N-linked (GlcNAc...) asparagine glycan is attached at Asn-350.

The protein belongs to the peptidase A1 family.

This Gallus gallus (Chicken) protein is Embryonic pepsinogen.